A 1092-amino-acid polypeptide reads, in one-letter code: Isoleucine--tRNA ligase (1092 aa).

Residues 53-63 (PFANGLPHYGH) carry the 'HIGH' region motif. A 'KMSKS' region motif is present at residues 613 to 617 (KLSKR). Lys-616 is an ATP binding site.

Belongs to the class-I aminoacyl-tRNA synthetase family. IleS type 2 subfamily. Monomer. Requires Zn(2+) as cofactor.

Its subcellular location is the cytoplasm. The catalysed reaction is tRNA(Ile) + L-isoleucine + ATP = L-isoleucyl-tRNA(Ile) + AMP + diphosphate. In terms of biological role, catalyzes the attachment of isoleucine to tRNA(Ile). As IleRS can inadvertently accommodate and process structurally similar amino acids such as valine, to avoid such errors it has two additional distinct tRNA(Ile)-dependent editing activities. One activity is designated as 'pretransfer' editing and involves the hydrolysis of activated Val-AMP. The other activity is designated 'posttransfer' editing and involves deacylation of mischarged Val-tRNA(Ile). The polypeptide is Isoleucine--tRNA ligase (Rickettsia conorii (strain ATCC VR-613 / Malish 7)).